The sequence spans 87 residues: Small ribosomal subunit protein bS21 (87 aa).

Residues histidine 35–arginine 52 are compositionally biased toward basic and acidic residues. Residues histidine 35–arginine 87 form a disordered region. The span at arginine 53–leucine 62 shows a compositional bias: basic residues. A compositionally biased stretch (basic and acidic residues) spans alanine 78 to arginine 87.

The sequence is that of Small ribosomal subunit protein bS21 from Rhodopseudomonas palustris (strain ATCC BAA-98 / CGA009).